Consider the following 185-residue polypeptide: Probable nicotinate-nucleotide adenylyltransferase (185 aa).

This sequence belongs to the NadD family.

It catalyses the reaction nicotinate beta-D-ribonucleotide + ATP + H(+) = deamido-NAD(+) + diphosphate. It participates in cofactor biosynthesis; NAD(+) biosynthesis; deamido-NAD(+) from nicotinate D-ribonucleotide: step 1/1. Its function is as follows. Catalyzes the reversible adenylation of nicotinate mononucleotide (NaMN) to nicotinic acid adenine dinucleotide (NaAD). The protein is Probable nicotinate-nucleotide adenylyltransferase of Methylorubrum extorquens (strain CM4 / NCIMB 13688) (Methylobacterium extorquens).